A 253-amino-acid chain; its full sequence is Ditrans,polycis-undecaprenyl-diphosphate synthase ((2E,6E)-farnesyl-diphosphate specific) (253 aa).

Residue Asp-26 is part of the active site. Position 26 (Asp-26) interacts with Mg(2+). Residues 27–30 (GNGR), Trp-31, Arg-39, His-43, and 71–73 (SSE) contribute to the substrate site. Residue Asn-74 is the Proton acceptor of the active site. Substrate is bound by residues Trp-75, Arg-77, and Arg-194. His-199 contacts Mg(2+). A substrate-binding site is contributed by 200–202 (RIS). Position 213 (Glu-213) interacts with Mg(2+).

The protein belongs to the UPP synthase family. In terms of assembly, homodimer. It depends on Mg(2+) as a cofactor.

The enzyme catalyses 8 isopentenyl diphosphate + (2E,6E)-farnesyl diphosphate = di-trans,octa-cis-undecaprenyl diphosphate + 8 diphosphate. Catalyzes the sequential condensation of isopentenyl diphosphate (IPP) with (2E,6E)-farnesyl diphosphate (E,E-FPP) to yield (2Z,6Z,10Z,14Z,18Z,22Z,26Z,30Z,34E,38E)-undecaprenyl diphosphate (di-trans,octa-cis-UPP). UPP is the precursor of glycosyl carrier lipid in the biosynthesis of bacterial cell wall polysaccharide components such as peptidoglycan and lipopolysaccharide. In Shigella flexneri, this protein is Ditrans,polycis-undecaprenyl-diphosphate synthase ((2E,6E)-farnesyl-diphosphate specific).